Consider the following 126-residue polypeptide: Methylglyoxal synthase (126 aa).

In terms of domain architecture, MGS-like spans 1–126 (MAGGKCIALI…AERLIKTLNH (126 aa)). Substrate is bound by residues His-12, Lys-16, 38–41 (TGTT), and 59–60 (SG). Residue Asp-65 is the Proton donor/acceptor of the active site. His-92 serves as a coordination point for substrate.

It belongs to the methylglyoxal synthase family.

It carries out the reaction dihydroxyacetone phosphate = methylglyoxal + phosphate. Functionally, catalyzes the formation of methylglyoxal from dihydroxyacetone phosphate. This Rhizobium rhizogenes (strain K84 / ATCC BAA-868) (Agrobacterium radiobacter) protein is Methylglyoxal synthase.